A 563-amino-acid polypeptide reads, in one-letter code: Arginine--tRNA ligase (563 aa).

A 'HIGH' region motif is present at residues 121–131; that stretch reads PNIAKPFSIGH.

It belongs to the class-I aminoacyl-tRNA synthetase family. As to quaternary structure, monomer.

The protein resides in the cytoplasm. The catalysed reaction is tRNA(Arg) + L-arginine + ATP = L-arginyl-tRNA(Arg) + AMP + diphosphate. The polypeptide is Arginine--tRNA ligase (Streptococcus pyogenes serotype M49 (strain NZ131)).